A 660-amino-acid chain; its full sequence is Putative ATP-dependent RNA helicase Pl10 (660 aa).

The span at M1–G11 shows a compositional bias: acidic residues. A disordered region spans residues M1–K117. At S2 the chain carries N-acetylserine. The segment covering L12–L21 has biased composition (low complexity). The segment covering R24–S34 has biased composition (polar residues). Residues R44–A66 show a composition bias toward basic and acidic residues. Position 55 is an N6-acetyllysine (K55). Phosphoserine occurs at positions 80, 84, and 89. The span at G93–Y103 shows a compositional bias: basic and acidic residues. R100 bears the Omega-N-methylarginine mark. At S101 the chain carries Phosphoserine. Residue Y103 is modified to Phosphotyrosine. R109 is modified (omega-N-methylarginine). At K117 the chain carries N6-acetyllysine. A Q motif motif is present at residues E179–K207. Phosphoserine is present on S182. Y199 to Q206 contacts ATP. One can recognise a Helicase ATP-binding domain in the interval I210–L402. Residue K214 forms a Glycyl lysine isopeptide (Lys-Gly) (interchain with G-Cter in SUMO2) linkage. A223–T230 provides a ligand contact to ATP. Residues D346–D349 carry the DEAD box motif. One can recognise a Helicase C-terminal domain in the interval N413–A574. The residue at position 455 (S455) is a Phosphoserine. R590 carries the post-translational modification Omega-N-methylarginine. 3 positions are modified to phosphoserine: S592, S603, and S610. The disordered stretch occupies residues R598–F632. Positions Q602–R620 are enriched in low complexity. Omega-N-methylarginine occurs at positions 615 and 630. The span at S621 to F632 shows a compositional bias: gly residues.

Belongs to the DEAD box helicase family. DDX3/DED1 subfamily. In terms of tissue distribution, testis.

The catalysed reaction is ATP + H2O = ADP + phosphate + H(+). Putative ATP-dependent RNA helicase. Possible role in a key step of the spermatogenic process. The sequence is that of Putative ATP-dependent RNA helicase Pl10 (D1Pas1) from Mus musculus (Mouse).